The chain runs to 305 residues: Protoheme IX farnesyltransferase 1 (305 aa).

Transmembrane regions (helical) follow at residues Ile22–Leu42, Ile53–Phe73, Val94–Gly114, Leu115–Leu135, Ile154–Val174, Ile179–Ile199, Leu230–Val250, and Leu283–Phe303.

Belongs to the UbiA prenyltransferase family. Protoheme IX farnesyltransferase subfamily. In terms of assembly, interacts with CtaA.

Its subcellular location is the cell membrane. The enzyme catalyses heme b + (2E,6E)-farnesyl diphosphate + H2O = Fe(II)-heme o + diphosphate. It functions in the pathway porphyrin-containing compound metabolism; heme O biosynthesis; heme O from protoheme: step 1/1. Converts heme B (protoheme IX) to heme O by substitution of the vinyl group on carbon 2 of heme B porphyrin ring with a hydroxyethyl farnesyl side group. The polypeptide is Protoheme IX farnesyltransferase 1 (Bacillus cytotoxicus (strain DSM 22905 / CIP 110041 / 391-98 / NVH 391-98)).